Consider the following 267-residue polypeptide: Geranylgeranylglyceryl phosphate synthase (267 aa).

The Mg(2+) site is built by Asp23 and Ser52. Sn-glycerol 1-phosphate is bound by residues 173-179 (YLEAGSG), 205-206 (GG), and 227-228 (GT).

The protein belongs to the GGGP/HepGP synthase family. Group II subfamily. Requires Mg(2+) as cofactor.

It is found in the cytoplasm. It carries out the reaction sn-glycerol 1-phosphate + (2E,6E,10E)-geranylgeranyl diphosphate = sn-3-O-(geranylgeranyl)glycerol 1-phosphate + diphosphate. It participates in membrane lipid metabolism; glycerophospholipid metabolism. Functionally, prenyltransferase that catalyzes the transfer of the geranylgeranyl moiety of geranylgeranyl diphosphate (GGPP) to the C3 hydroxyl of sn-glycerol-1-phosphate (G1P). This reaction is the first ether-bond-formation step in the biosynthesis of archaeal membrane lipids. The sequence is that of Geranylgeranylglyceryl phosphate synthase from Caldivirga maquilingensis (strain ATCC 700844 / DSM 13496 / JCM 10307 / IC-167).